The chain runs to 367 residues: tRNA-specific 2-thiouridylase MnmA (367 aa).

Residues 12–19 and M38 contribute to the ATP site; that span reads GMSGGVDS. Residues 98-100 are interaction with target base in tRNA; the sequence is NPD. The active-site Nucleophile is C103. C103 and C200 are joined by a disulfide. G128 is an ATP binding site. Residues 150–152 form an interaction with tRNA region; sequence KDQ. Residue C200 is the Cysteine persulfide intermediate of the active site. The interval 312–313 is interaction with tRNA; that stretch reads RY.

Belongs to the MnmA/TRMU family. In terms of assembly, interacts with TusE.

It localises to the cytoplasm. The enzyme catalyses S-sulfanyl-L-cysteinyl-[protein] + uridine(34) in tRNA + AH2 + ATP = 2-thiouridine(34) in tRNA + L-cysteinyl-[protein] + A + AMP + diphosphate + H(+). Functionally, catalyzes the 2-thiolation of uridine at the wobble position (U34) of tRNA(Lys), tRNA(Glu) and tRNA(Gln), leading to the formation of s(2)U34, the first step of tRNA-mnm(5)s(2)U34 synthesis. Sulfur is provided by IscS, via a sulfur-relay system. Binds ATP and its substrate tRNAs. The protein is tRNA-specific 2-thiouridylase MnmA of Proteus mirabilis (strain HI4320).